The chain runs to 881 residues: Rho GTPase-activating protein 17 (881 aa).

In terms of domain architecture, BAR spans 14–246 (QTVGRAEKTE…MRAHQDKWAE (233 aa)). One can recognise a Rho-GAP domain in the interval 252–442 (TPLEEHLKRS…PIIQHADWFF (191 aa)). Over residues 459 to 475 (TPSSNHSFHTGNDSDSG) the composition is skewed to polar residues. Residues 459–482 (TPSSNHSFHTGNDSDSGTLERKRP) are disordered. 2 positions are modified to phosphoserine: serine 484 and serine 575. The segment at 511–881 (GGTLNRKHIS…IDNDTESTAL (371 aa)) is disordered. The segment covering 592-617 (RNNSQIASGQNQPQAAAGSHQLSMGQ) has biased composition (polar residues). The span at 637–650 (APAPPKPGNPPPGH) shows a compositional bias: pro residues. Over residues 653–664 (GQSSSGTSQHPP) the composition is skewed to low complexity. Residues 665 to 678 (SLSPKPPTRSPSPP) are compositionally biased toward pro residues. Residues threonine 679 and threonine 682 each carry the phosphothreonine modification. A compositionally biased stretch (low complexity) spans 679–698 (TQHTGQPPGQPSAPSQLSAP). 2 positions are modified to phosphoserine: serine 702 and serine 704. Composition is skewed to pro residues over residues 712–721 (NHPPPQPPTQ), 752–764 (HTPPQTPTPPSTP), and 806–816 (RPSVPPPPQPP). Threonine 753, threonine 757, and threonine 759 each carry phosphothreonine. The SH3-binding motif lies at 753–766 (TPPQTPTPPSTPPL). Serine 762 bears the Phosphoserine mark. Threonine 763 bears the Phosphothreonine mark. A compositionally biased stretch (polar residues) spans 822-844 (GDSSLTNTAPTASKIVTDSNSRV). Residues 845–865 (SEPHRSIFPEMHSDSASKDVP) show a composition bias toward basic and acidic residues. Residues 872 to 881 (IDNDTESTAL) are compositionally biased toward acidic residues.

As to quaternary structure, component of a complex whose core is composed of ARHGAP17, AMOT, PALS1, PATJ and PARD3/PAR3. Interacts with NHERF1, FNBP1, TRIP10, CAPZA (CAPZA1, CAPZA2 or CAPZA3), CAPZB, CD2AP and SH3KBP1/CIN85. In terms of tissue distribution, ubiquitously expressed. Expressed at higher level in heart and placenta.

It localises to the membrane. It is found in the cytoplasm. Its subcellular location is the cell junction. The protein resides in the tight junction. Functionally, rho GTPase-activating protein involved in the maintenance of tight junction by regulating the activity of CDC42, thereby playing a central role in apical polarity of epithelial cells. Specifically acts as a GTPase activator for the CDC42 GTPase by converting it to an inactive GDP-bound state. The complex formed with AMOT acts by regulating the uptake of polarity proteins at tight junctions, possibly by deciding whether tight junction transmembrane proteins are recycled back to the plasma membrane or sent elsewhere. Participates in the Ca(2+)-dependent regulation of exocytosis, possibly by catalyzing GTPase activity of Rho family proteins and by inducing the reorganization of the cortical actin filaments. Acts as a GTPase activator in vitro for RAC1. The sequence is that of Rho GTPase-activating protein 17 (ARHGAP17) from Homo sapiens (Human).